Reading from the N-terminus, the 214-residue chain is Small ribosomal subunit protein uS5 (214 aa).

A disordered region spans residues 1 to 61 (MTDSSPQSNP…QERDSEWQER (61 aa)). Residues 9–29 (NPNAVPGAADVPAAAEGQQQQ) are compositionally biased toward low complexity. Residues 30–60 (EQRRGRGDRDGRRGDRRGGRRGQERDSEWQE) are compositionally biased toward basic and acidic residues. The region spanning 58 to 121 (WQERVVQIRR…ADGKKHLVKV (64 aa)) is the S5 DRBM domain.

This sequence belongs to the universal ribosomal protein uS5 family. In terms of assembly, part of the 30S ribosomal subunit. Contacts proteins S4 and S8.

With S4 and S12 plays an important role in translational accuracy. Functionally, located at the back of the 30S subunit body where it stabilizes the conformation of the head with respect to the body. This is Small ribosomal subunit protein uS5 from Synechococcus sp. (strain CC9605).